Reading from the N-terminus, the 408-residue chain is Peptidase T (408 aa).

Residue His-78 participates in Zn(2+) binding. Asp-80 is an active-site residue. Asp-141 contributes to the Zn(2+) binding site. Glu-175 (proton acceptor) is an active-site residue. Zn(2+) contacts are provided by Glu-176, Asp-198, and His-380.

This sequence belongs to the peptidase M20B family. It depends on Zn(2+) as a cofactor.

It is found in the cytoplasm. The catalysed reaction is Release of the N-terminal residue from a tripeptide.. Functionally, cleaves the N-terminal amino acid of tripeptides. This is Peptidase T from Clostridium botulinum (strain Kyoto / Type A2).